We begin with the raw amino-acid sequence, 72 residues long: Alpha-elapitoxin-Dv2b (72 aa).

5 cysteine pairs are disulfide-bonded: cysteine 3–cysteine 21, cysteine 14–cysteine 42, cysteine 27–cysteine 31, cysteine 46–cysteine 57, and cysteine 58–cysteine 63.

It belongs to the three-finger toxin family. Long-chain subfamily. Type II alpha-neurotoxin sub-subfamily. Post-translationally, neurotoxin 4.7.3 differs from 4.9.3 only in that Trp-26 has undergone partial photooxidation. As to expression, expressed by the venom gland.

Its subcellular location is the secreted. In terms of biological role, binds with high affinity to muscular (alpha-1/CHRNA1) and neuronal (alpha-7/CHRNA7) nicotinic acetylcholine receptor (nAChR) and inhibits acetylcholine from binding to the receptor, thereby impairing neuromuscular and neuronal transmission. This Dendroaspis viridis (Western green mamba) protein is Alpha-elapitoxin-Dv2b.